The sequence spans 102 residues: Urease subunit beta (102 aa).

This sequence belongs to the urease beta subunit family. As to quaternary structure, heterotrimer of UreA (gamma), UreB (beta) and UreC (alpha) subunits. Three heterotrimers associate to form the active enzyme.

Its subcellular location is the cytoplasm. The catalysed reaction is urea + 2 H2O + H(+) = hydrogencarbonate + 2 NH4(+). Its pathway is nitrogen metabolism; urea degradation; CO(2) and NH(3) from urea (urease route): step 1/1. The protein is Urease subunit beta of Trichodesmium erythraeum (strain IMS101).